The following is a 289-amino-acid chain: UTP--glucose-1-phosphate uridylyltransferase 2 (289 aa).

This sequence belongs to the UDPGP type 2 family.

The catalysed reaction is alpha-D-glucose 1-phosphate + UTP + H(+) = UDP-alpha-D-glucose + diphosphate. The protein operates within glycolipid metabolism; diglucosyl-diacylglycerol biosynthesis. Functionally, catalyzes the formation of UDP-glucose from glucose-1-phosphate and UTP. This is an intermediate step in the biosynthesis of diglucosyl-diacylglycerol (Glc2-DAG), i.e. a glycolipid found in the membrane, which is also used as a membrane anchor for lipoteichoic acid (LTA). The protein is UTP--glucose-1-phosphate uridylyltransferase 2 (gtaB2) of Staphylococcus saprophyticus subsp. saprophyticus (strain ATCC 15305 / DSM 20229 / NCIMB 8711 / NCTC 7292 / S-41).